Consider the following 495-residue polypeptide: Polybrominated aromatic compounds synthase (495 aa).

Cys437 contributes to the heme binding site.

It belongs to the cytochrome P450 family. The cofactor is heme.

Functionally, cytochrome P450 protein involved in the biosynthesis of polybrominated aromatic organic compounds. In the presence of ferredoxin, ferredoxin reductase and NADH, catalyzes the coupling of bromophenols and bromopyrroles, forming various polybrominated biphenyls and hydroxylated polybrominated diphenyl ethers (OH-BDE). Can also mediate the heterocoupling of 3,5-dibromocatechol, forming six different compounds, including polybrominated dibenzo-p-dioxins, which are among the most toxic molecules known to man. This Marinomonas mediterranea (strain ATCC 700492 / JCM 21426 / NBRC 103028 / MMB-1) protein is Polybrominated aromatic compounds synthase.